We begin with the raw amino-acid sequence, 253 residues long: uncharacterized protein (253 aa).

Position 6–30 (6–30) interacts with NADP(+); sequence IITASDSGIGKECALLLAQQGFDIG. S140 is a binding site for substrate. The active-site Proton acceptor is the Y153.

It belongs to the short-chain dehydrogenases/reductases (SDR) family.

This is an uncharacterized protein from Escherichia coli (strain K12).